The following is a 367-amino-acid chain: Mitochondrial distribution and morphology protein 34 (367 aa).

Residues 1–197 (MSFNFTWPEF…LPSIIHRLSQ (197 aa)) form the SMP-LTD domain. 2 disordered regions span residues 267–311 (QGLK…ALSS) and 347–367 (PAHR…FHLS). Over residues 286-302 (FHTTSRVRVPSSLESNA) the composition is skewed to polar residues.

The protein belongs to the MDM34 family. Component of the ER-mitochondria encounter structure (ERMES) or MDM complex, composed of MMM1, MDM10, MDM12 and MDM34.

Its subcellular location is the mitochondrion outer membrane. Component of the ERMES/MDM complex, which serves as a molecular tether to connect the endoplasmic reticulum (ER) and mitochondria. Components of this complex are involved in the control of mitochondrial shape and protein biogenesis, and function in nonvesicular lipid trafficking between the ER and mitochondria. MDM34 is required for the interaction of the ER-resident membrane protein MMM1 and the outer mitochondrial membrane-resident beta-barrel protein MDM10. The polypeptide is Mitochondrial distribution and morphology protein 34 (Malassezia globosa (strain ATCC MYA-4612 / CBS 7966) (Dandruff-associated fungus)).